We begin with the raw amino-acid sequence, 436 residues long: Trigger factor (436 aa).

In terms of domain architecture, PPIase FKBP-type spans 162 to 247; the sequence is GDRVIIDFEG…LNNVSEATLP (86 aa).

The protein belongs to the FKBP-type PPIase family. Tig subfamily.

It is found in the cytoplasm. It carries out the reaction [protein]-peptidylproline (omega=180) = [protein]-peptidylproline (omega=0). Involved in protein export. Acts as a chaperone by maintaining the newly synthesized protein in an open conformation. Functions as a peptidyl-prolyl cis-trans isomerase. The sequence is that of Trigger factor from Neisseria meningitidis serogroup C (strain 053442).